We begin with the raw amino-acid sequence, 362 residues long: Tryptophan 2,3-dioxygenase (362 aa).

Residues Phe-40–His-44 and Arg-111 contribute to the substrate site. Heme is bound at residue His-297. Thr-311 serves as a coordination point for substrate.

The protein belongs to the tryptophan 2,3-dioxygenase family. As to quaternary structure, homotetramer. Requires heme as cofactor.

It catalyses the reaction L-tryptophan + O2 = N-formyl-L-kynurenine. It participates in amino-acid degradation; L-tryptophan degradation via kynurenine pathway; L-kynurenine from L-tryptophan: step 1/2. Functionally, heme-dependent dioxygenase that catalyzes the oxidative cleavage of the L-tryptophan (L-Trp) pyrrole ring and converts L-tryptophan to N-formyl-L-kynurenine. Catalyzes the oxidative cleavage of the indole moiety. The protein is Tryptophan 2,3-dioxygenase of Alteromonas mediterranea (strain DSM 17117 / CIP 110805 / LMG 28347 / Deep ecotype).